A 37-amino-acid polypeptide reads, in one-letter code: Large ribosomal subunit protein bL36 (37 aa).

This sequence belongs to the bacterial ribosomal protein bL36 family.

The sequence is that of Large ribosomal subunit protein bL36 from Streptomyces avermitilis (strain ATCC 31267 / DSM 46492 / JCM 5070 / NBRC 14893 / NCIMB 12804 / NRRL 8165 / MA-4680).